A 325-amino-acid polypeptide reads, in one-letter code: uncharacterized protein (325 aa).

Coiled coils occupy residues 38–69 (VHVA…QNQS) and 201–229 (ANTD…LEFK).

This is an uncharacterized protein from Acanthamoeba polyphaga (Amoeba).